Reading from the N-terminus, the 275-residue chain is Large ribosomal subunit protein uL2 (275 aa).

The segment at V224–G251 is disordered.

The protein belongs to the universal ribosomal protein uL2 family. As to quaternary structure, part of the 50S ribosomal subunit. Forms a bridge to the 30S subunit in the 70S ribosome.

One of the primary rRNA binding proteins. Required for association of the 30S and 50S subunits to form the 70S ribosome, for tRNA binding and peptide bond formation. It has been suggested to have peptidyltransferase activity; this is somewhat controversial. Makes several contacts with the 16S rRNA in the 70S ribosome. The chain is Large ribosomal subunit protein uL2 from Heliobacterium modesticaldum (strain ATCC 51547 / Ice1).